The chain runs to 102 residues: NADH-quinone oxidoreductase subunit K (102 aa).

The next 3 helical transmembrane spans lie at 5 to 25 (LAHY…GIFL), 31 to 51 (IILL…FVAF), and 62 to 82 (VFVF…LAIL).

This sequence belongs to the complex I subunit 4L family. As to quaternary structure, NDH-1 is composed of 14 different subunits. Subunits NuoA, H, J, K, L, M, N constitute the membrane sector of the complex.

It localises to the cell inner membrane. The enzyme catalyses a quinone + NADH + 5 H(+)(in) = a quinol + NAD(+) + 4 H(+)(out). NDH-1 shuttles electrons from NADH, via FMN and iron-sulfur (Fe-S) centers, to quinones in the respiratory chain. The immediate electron acceptor for the enzyme in this species is believed to be ubiquinone. Couples the redox reaction to proton translocation (for every two electrons transferred, four hydrogen ions are translocated across the cytoplasmic membrane), and thus conserves the redox energy in a proton gradient. The protein is NADH-quinone oxidoreductase subunit K of Bordetella petrii (strain ATCC BAA-461 / DSM 12804 / CCUG 43448).